The chain runs to 276 residues: NAD-capped RNA hydrolase NudC (276 aa).

Position 82 (Arg82) interacts with substrate. Residues Cys112 and Cys115 each coordinate Zn(2+). A substrate-binding site is contributed by Glu125. Zn(2+)-binding residues include Cys130 and Cys133. Tyr138 contributes to the substrate binding site. A Nudix hydrolase domain is found at 139-262 (PRISPSMIVL…SIARYLIDLY (124 aa)). A divalent metal cation-binding residues include Ala172, Glu188, and Glu192. Residues 173-194 (GFAEPGESAEDCLVREVREEVA) carry the Nudix box motif. Position 206 to 213 (206 to 213 (QCWPFPHS)) interacts with substrate. Glu233 contributes to the a divalent metal cation binding site. Ala255 lines the substrate pocket.

This sequence belongs to the Nudix hydrolase family. NudC subfamily. Homodimer. It depends on Mg(2+) as a cofactor. Requires Mn(2+) as cofactor. Zn(2+) is required as a cofactor.

It carries out the reaction a 5'-end NAD(+)-phospho-ribonucleoside in mRNA + H2O = a 5'-end phospho-adenosine-phospho-ribonucleoside in mRNA + beta-nicotinamide D-ribonucleotide + 2 H(+). The enzyme catalyses NAD(+) + H2O = beta-nicotinamide D-ribonucleotide + AMP + 2 H(+). It catalyses the reaction NADH + H2O = reduced beta-nicotinamide D-ribonucleotide + AMP + 2 H(+). Functionally, mRNA decapping enzyme that specifically removes the nicotinamide adenine dinucleotide (NAD) cap from a subset of mRNAs by hydrolyzing the diphosphate linkage to produce nicotinamide mononucleotide (NMN) and 5' monophosphate mRNA. The NAD-cap is present at the 5'-end of some mRNAs and stabilizes RNA against 5'-processing. Has preference for mRNAs with a 5'-end purine. Catalyzes the hydrolysis of a broad range of dinucleotide pyrophosphates. The chain is NAD-capped RNA hydrolase NudC from Pseudomonas putida (strain ATCC 47054 / DSM 6125 / CFBP 8728 / NCIMB 11950 / KT2440).